A 1264-amino-acid chain; its full sequence is Kinesin-like protein KIN-14B (1264 aa).

The segment covering 1 to 10 has biased composition (polar residues); the sequence is MAEQKSTNMW. The segment at 1 to 52 is disordered; sequence MAEQKSTNMWNWEVTGFESKKSPSSEEGVHRTPSSMLRRYSIPKNSLPPHSS. Residues 18–30 are compositionally biased toward basic and acidic residues; the sequence is ESKKSPSSEEGVH. Residues 53–84 adopt a coiled-coil conformation; it reads ELASKVQSLKDKVQLAKDDYVGLRQEATDLQE. Residues 138–452 form the Kinesin motor domain; it reads NVKVFCRARP…LNYAARARNT (315 aa). 219 to 226 provides a ligand contact to ATP; the sequence is GQTHAGKT. Coiled coils occupy residues 462–511, 545–592, and 617–640; these read IKKW…YNEV, QLRN…LKSD, and TKKLEEELKKRDALIERLHEENEK. The tract at residues 588-615 is disordered; sequence ALKSDMTRSRDPLEPQPRAAENTLDSSA. Residues 589–600 show a composition bias toward basic and acidic residues; sequence LKSDMTRSRDPL. Positions 652 to 668 are enriched in low complexity; sequence SSTQVSSPSSKASPTVQ. Disordered stretches follow at residues 652 to 684 and 1117 to 1136; these read SSTQVSSPSSKASPTVQPADVDSAGTLPSSVDK and PEQEDNLQDEKRPSIDSISS.

Belongs to the TRAFAC class myosin-kinesin ATPase superfamily. Kinesin family. KIN-14 subfamily. In terms of assembly, homodimer and heterodimer with KCA1. Interacts with CDKA-1. Interacts with At4g14310. As to expression, expressed in roots, leaves, stems and flowers.

It localises to the cell membrane. Functionally, kinesin-like protein required for chloroplast movements and anchor to the plasma membrane. Mediates chloroplast movement via chloroplast actin (cp-actin) filaments. Required for the chloroplast avoidance response under high intensity blue light. Mediates redundantly with CHUP1 the nuclear avoidance response under high intensity blue light. May be involved in division plane determination. The sequence is that of Kinesin-like protein KIN-14B from Arabidopsis thaliana (Mouse-ear cress).